The following is a 115-amino-acid chain: UPF0212 protein MJ0068 (115 aa).

The protein belongs to the UPF0212 family.

This chain is UPF0212 protein MJ0068, found in Methanocaldococcus jannaschii (strain ATCC 43067 / DSM 2661 / JAL-1 / JCM 10045 / NBRC 100440) (Methanococcus jannaschii).